We begin with the raw amino-acid sequence, 228 residues long: MTKLVLIRHGQSVWNQQDLFTGWTDVELTEQGVAEAKAAGEKLLAAGYDFDACHTSVLKRAIKTLNLVLETMDRLWLPVQKDWRLNERHYGGLQGLNKTQTAAQHGKEQVHIWRRSYDIPPPPLPEGDERLPDGDRRYKGLSKEQLPRTESLKDCVARVLPYWHESIAPQIRAGQRVLISAHGNSLRGLVMYLSGLSEEEITGFEIPTGRPLVYELDDALKPTDRFFL.

Residues arginine 8–asparagine 15, threonine 21–glycine 22, arginine 60, glutamate 87–tyrosine 90, lysine 98, arginine 114–arginine 115, and glycine 183–asparagine 184 contribute to the substrate site. Histidine 9 acts as the Tele-phosphohistidine intermediate in catalysis. Glutamate 87 acts as the Proton donor/acceptor in catalysis.

It belongs to the phosphoglycerate mutase family. BPG-dependent PGAM subfamily. Homodimer.

The enzyme catalyses (2R)-2-phosphoglycerate = (2R)-3-phosphoglycerate. The protein operates within carbohydrate degradation; glycolysis; pyruvate from D-glyceraldehyde 3-phosphate: step 3/5. In terms of biological role, catalyzes the interconversion of 2-phosphoglycerate and 3-phosphoglycerate. The sequence is that of 2,3-bisphosphoglycerate-dependent phosphoglycerate mutase from Rhodospirillum centenum (strain ATCC 51521 / SW).